We begin with the raw amino-acid sequence, 450 residues long: Probable glycosidase CRR1 (450 aa).

The first 17 residues, 1–17 (MSKRIIQLILLSAFARA), serve as a signal peptide directing secretion. The GH16 domain maps to 67 to 347 (SPESCVPVPA…WENAPDIKAH (281 aa)). Catalysis depends on Glu-225, which acts as the Nucleophile. Glu-229 acts as the Proton donor in catalysis. The interval 428–450 (AQRQQHHRRSLPHVEAPPITNTM) is disordered.

Belongs to the glycosyl hydrolase 16 family. CRR1 subfamily.

It is found in the spore wall. Spore specific glycosidase involved in spore wall assembly during sporulation. May be involved in copper import. This Eremothecium gossypii (strain ATCC 10895 / CBS 109.51 / FGSC 9923 / NRRL Y-1056) (Yeast) protein is Probable glycosidase CRR1 (CRR1).